Reading from the N-terminus, the 292-residue chain is MIIDGKRIAEEIQLEIKELIQQSLCRPPCLAVLIVGSHPASQIYVNRKTAACKAVGIASIKCELPFTISEEELIREVEKLNVDPQIDGILVQLPLPPHINSNRVNYHIDPQKDVDGFHPLNVGKMLIGELDGFLPCTPFGIKTLLERTGIEVCGKHALIIGRSNIVGKPMAALLMQSYPGGNATVTVAHRYTKNLKELCLQADLIIVAIGQPKLITADMVKEGVIIVDVGINKIHDSSKKNGYQIVGDVDFVNVAPKCAFITPVPGGVGPMTIAMLLYNTLLSYSKSQNLNL.

NADP(+)-binding positions include 161–163 (GRS) and isoleucine 231.

It belongs to the tetrahydrofolate dehydrogenase/cyclohydrolase family. As to quaternary structure, homodimer.

The catalysed reaction is (6R)-5,10-methylene-5,6,7,8-tetrahydrofolate + NADP(+) = (6R)-5,10-methenyltetrahydrofolate + NADPH. It carries out the reaction (6R)-5,10-methenyltetrahydrofolate + H2O = (6R)-10-formyltetrahydrofolate + H(+). Its pathway is one-carbon metabolism; tetrahydrofolate interconversion. Catalyzes the oxidation of 5,10-methylenetetrahydrofolate to 5,10-methenyltetrahydrofolate and then the hydrolysis of 5,10-methenyltetrahydrofolate to 10-formyltetrahydrofolate. This is Bifunctional protein FolD from Protochlamydia amoebophila (strain UWE25).